We begin with the raw amino-acid sequence, 648 residues long: FAD-binding monooxygenase trt3 (648 aa).

FAD-binding positions include Thr-118–Trp-121, Asp-130–Ile-131, and Tyr-136. Position 128–130 (Met-128–Asp-130) interacts with NADP(+). NADP(+) contacts are provided by residues Thr-274–Gln-280 and Arg-297–Thr-298.

This sequence belongs to the FAD-binding monooxygenase family. FAD is required as a cofactor.

The protein operates within secondary metabolite biosynthesis; terpenoid biosynthesis. Functionally, FAD-binding monooxygenase; part of the gene cluster that mediates the biosynthesis of terretonin, a fungal meroterpenoid that acts as a mycotoxin. The first step of the pathway is the synthesis of 3,5-dimethylorsellinic acid (DMOA) by the polyketide synthase trt4. DMOA is then prenylated into farnesyl-DMOA by the polyprenyl transferase trt2. Methylation by the methyltransferase trt5 then leads to farnesyl-DMOA methyl ester which is further subject to epoxidation by the FAD-dependent monooxygenase trt8 to yield epoxyfarnesyl-DMOA methyl ester. Cyclization of epoxyfarnesyl-DMOA methyl ester by the terpene cyclase trt1 leads to a tetracycle intermediate which is in turn converted to preterretonin. Dehydrogenase trt9 comes next to transform preterretonin to preterrenoid. The FAD-dependent monooxygenase trt3 is then required for the C-hydroxylation at C16 of preterrenoid to yield terrenoid. The cytochrome P450 trt6 catalyzes three successive oxidations to transform terrenoid into an unstable intermediate, which then undergoes the D-ring expansion and unusual rearrangement of the methoxy group to afford the core skeleton of terretonin. Trt14 catalyzes the D-ring expansion of terretonin involving intramolecular methoxy rearrangement as well as the hydrolysis of the expanded D-ring and the methyl ester moiety. Finally, the nonheme iron-dependent dioxygenase trt7 accomplishes the last two oxidation reactions steps to complete the biosynthesis of terretonin. Terretonin C is produced via spontaneous decarboxylation of the terretonin precursor. Another shunt product of the terretonin biosynthesis is dihydrofarnesyl-DMOA, derived from epoxyfarnesyl-DMOA through hydrolysis of the epoxide. The chain is FAD-binding monooxygenase trt3 from Aspergillus terreus (strain NIH 2624 / FGSC A1156).